A 458-amino-acid chain; its full sequence is Adenylosuccinate synthetase (458 aa).

GTP contacts are provided by residues 17–23 (GDEGKGK) and 45–47 (GHT). Asp-18 (proton acceptor) is an active-site residue. 2 residues coordinate Mg(2+): Asp-18 and Gly-45. Residues 18–21 (DEGK), 43–46 (NAGH), Thr-137, Arg-151, Gln-247, Thr-262, and Arg-330 contribute to the IMP site. Catalysis depends on His-46, which acts as the Proton donor. Residue 326–332 (VTTGRSR) coordinates substrate. Residues Arg-332, 358–360 (KLD), and 440–442 (STG) contribute to the GTP site.

It belongs to the adenylosuccinate synthetase family. Homodimer. The cofactor is Mg(2+).

Its subcellular location is the cytoplasm. It carries out the reaction IMP + L-aspartate + GTP = N(6)-(1,2-dicarboxyethyl)-AMP + GDP + phosphate + 2 H(+). It participates in purine metabolism; AMP biosynthesis via de novo pathway; AMP from IMP: step 1/2. Its function is as follows. Plays an important role in the de novo pathway of purine nucleotide biosynthesis. Catalyzes the first committed step in the biosynthesis of AMP from IMP. The sequence is that of Adenylosuccinate synthetase from Albidiferax ferrireducens (strain ATCC BAA-621 / DSM 15236 / T118) (Rhodoferax ferrireducens).